We begin with the raw amino-acid sequence, 942 residues long: MQNKIIIHGARAHNLKNIDVEIPRDKLVVVTGLSGSGKSSLAFDTIYAEGQRRYVESLSAYARQFLGNMEKPDVDSIDGLSPAISIDQKTTSKNPRSTVGTVTEINDYLRLLYARVGTPYCINGHGAITASSAEQIVEQVLALPERTRMQILAPVVRRKKGQHKTVFEKIQKDGYVRVRVDGDIFDVTEVPELSKSKMHNIEVVIDRLVNKDGIRSRLFDSVEAALRLGDGYLMIDTMDGNELLFSEHYSCPVCGFTVPELEPRLFSFNAPFGSCPTCDGLGIKLEVDLDLVVPDPSKSLREGALAPWNPISSNYYPTMLEQAMASFGVDMDTPFEALTEEERDLVLYGSGDREFHFHYVNDFGGERNIDIPFEGVVTNVNRRYHETNSDYTRNVMRGYMNELTCATCHGYRLNDQALCVHVGGEEGTHIGQISELSIADHLQLLEELELTENESTIAKPIVKEIHDRLTFLNNVGLNYLTLSRAAGTLSGGESQRIRLATQIGSNLSGVLYILDEPSIGLHQRDNDRLIESLKKMRDLGNTLIVVEHDEDTMMQADWLIDVGPGAGEFGGEITASGTPKQVAKNKKSITGQYLSGKKFIPVPLERRSGNGRFIEIKGAAQNNLQSLDVRFPLGKFIAVTGVSGSGKSTLVNSILKKAVAQKLNRNADKPGKYHSISGIEHIERLIDIDQSPIGRTPRSNPATYTGVFDDIRDLFAQTNEAKIRGYKKGRFSFNVKGGRCEACSGDGIIKIEMHFLPDVYVPCEVCHGRRYNSETLEVHYKGKNIAEVLDMTVDDALVFFSAIPKIARKIQTIKDVGLGYVTLGQPATTLSGGEAQRMKLASELHKRSTGKSLYILDEPTTGLHTDDIARLLKVLERFVDDGNTVLVIEHNLDVIKSADHIIDLGPEGGDGGGQIVATGTPEEVAQVKESYTGHYLKVKLQQ.

Position 32-39 (32-39 (GLSGSGKS)) interacts with ATP. The C4-type zinc-finger motif lies at 251–278 (CPVCGFTVPELEPRLFSFNAPFGSCPTC). 2 ABC transporter domains span residues 308–589 (WNPI…KKSI) and 609–937 (GNGR…HYLK). 641–648 (GVSGSGKS) contacts ATP. The C4-type zinc-finger motif lies at 740-766 (CEACSGDGIIKIEMHFLPDVYVPCEVC).

This sequence belongs to the ABC transporter superfamily. UvrA family. As to quaternary structure, forms a heterotetramer with UvrB during the search for lesions.

It is found in the cytoplasm. Its function is as follows. The UvrABC repair system catalyzes the recognition and processing of DNA lesions. UvrA is an ATPase and a DNA-binding protein. A damage recognition complex composed of 2 UvrA and 2 UvrB subunits scans DNA for abnormalities. When the presence of a lesion has been verified by UvrB, the UvrA molecules dissociate. This Streptococcus pyogenes serotype M1 protein is UvrABC system protein A.